Reading from the N-terminus, the 196-residue chain is Small nuclear ribonucleoprotein-associated protein B (196 aa).

The Sm domain occupies 7–101; the sequence is AHSSRLANLI…ILSTVVEDKP (95 aa). Residues 105–132 carry the Nuclear localization signal motif; it reads KKERLVRDKKEKKQAQKQTKLRKEKEKK. Positions 108 to 118 are enriched in basic and acidic residues; the sequence is RLVRDKKEKKQ. The interval 108-196 is disordered; sequence RLVRDKKEKK…FQPPPGFKRK (89 aa). The span at 140–181 shows a compositional bias: polar residues; sequence NTANAKHTSSNSREIAQPSSSRYNGGNDNIGANRSRFNNEAP.

It belongs to the snRNP SmB/SmN family. In terms of assembly, component of the Sm core complex, present in spliceosomal snRNP U1, U2, U4/U6 and U5. The core complex contains SMB1, SMD1, SMD2, SMD3, SME1, SMX3 and SMX2 (Sm proteins B, D1, D2, D3, E, F and G, respectively), and is probably a heptameric ring structure. SMB1 specifically interacts with SMD3. Belongs to the CWC complex (or CEF1-associated complex), a spliceosome sub-complex reminiscent of a late-stage spliceosome composed of the U2, U5 and U6 snRNAs and at least BUD13, BUD31, BRR2, CDC40, CEF1, CLF1, CUS1, CWC2, CWC15, CWC21, CWC22, CWC23, CWC24, CWC25, CWC27, ECM2, HSH155, IST3, ISY1, LEA1, MSL1, NTC20, PRP8, PRP9, PRP11, PRP19, PRP21, PRP22, PRP45, PRP46, SLU7, SMB1, SMD1, SMD2, SMD3, SMX2, SMX3, SNT309, SNU114, SPP2, SYF1, SYF2, RSE1 and YJU2. Component of the U4/U6-U5 tri-snRNP complex composed of the U4, U6 and U5 snRNAs and at least PRP3, PRP4, PRP6, PRP8, PRP18, PRP38, SNU13, SNU23, SNU66, SNU114, SPP381, SMB1, SMD1, SMD2, SMD3, SMX2, SMX3, LSM2, LSM3, LSM4, LSM5, LSM6, LSM7, LSM8, BRR2 and DIB1. Interacts with the trimethylguanosine synthase TGS1.

The protein localises to the nucleus. Its subcellular location is the cytoplasm. In terms of biological role, plays a role in pre-mRNA splicing as a core component of the spliceosomal U1, U2, U4 and U5 small nuclear ribonucleoproteins (snRNPs), the building blocks of the spliceosome. The polypeptide is Small nuclear ribonucleoprotein-associated protein B (SMB1) (Saccharomyces cerevisiae (strain ATCC 204508 / S288c) (Baker's yeast)).